The sequence spans 150 residues: Histone H2B.2 (150 aa).

2 stretches are compositionally biased toward basic and acidic residues: residues 1-21 (MAPKAEKKPAEKKPAEEKAGE) and 33-49 (EKRLPASKGEKGGEGKK). A disordered region spans residues 1–58 (MAPKAEKKPAEKKPAEEKAGEKAPAAGKKPKAEKRLPASKGEKGGEGKKERGRKKAKK). An N6-acetyllysine mark is found at lysine 7 and lysine 34. Lysine 146 participates in a covalent cross-link: Glycyl lysine isopeptide (Lys-Gly) (interchain with G-Cter in ubiquitin).

This sequence belongs to the histone H2B family. The nucleosome is a histone octamer containing two molecules each of H2A, H2B, H3 and H4 assembled in one H3-H4 heterotetramer and two H2A-H2B heterodimers. The octamer wraps approximately 147 bp of DNA. In terms of processing, can be acetylated to form H2BK6ac and H2BK33ac. Post-translationally, monoubiquitinated by BRE1 to form H2BK143ub1 and deubiquitinated by UBP26. Required for heterochromatic histone H3 di- and trimethylation at H3K4me. May give a specific tag for epigenetic transcriptional activation.

The protein localises to the nucleus. It is found in the chromosome. In terms of biological role, core component of nucleosome. Nucleosomes wrap and compact DNA into chromatin, limiting DNA accessibility to the cellular machineries which require DNA as a template. Histones thereby play a central role in transcription regulation, DNA repair, DNA replication and chromosomal stability. DNA accessibility is regulated via a complex set of post-translational modifications of histones, also called histone code, and nucleosome remodeling. In Oryza sativa subsp. indica (Rice), this protein is Histone H2B.2 (H2B.2).